We begin with the raw amino-acid sequence, 557 residues long: Formate--tetrahydrofolate ligase (557 aa).

Position 65-72 (65-72 (TPAGEGKT)) interacts with ATP.

This sequence belongs to the formate--tetrahydrofolate ligase family. In terms of assembly, homotetramer.

It catalyses the reaction (6S)-5,6,7,8-tetrahydrofolate + formate + ATP = (6R)-10-formyltetrahydrofolate + ADP + phosphate. It participates in one-carbon metabolism; tetrahydrofolate interconversion. The chain is Formate--tetrahydrofolate ligase (fhs) from Methylorubrum extorquens (strain ATCC 14718 / DSM 1338 / JCM 2805 / NCIMB 9133 / AM1) (Methylobacterium extorquens).